A 76-amino-acid chain; its full sequence is Kappa-actitoxin-Avd4e (76 aa).

The N-terminal stretch at 1 to 19 (MNKALFLCLVVLCAAVVFA) is a signal peptide. Positions 20-31 (AEDLQKAKHAPF) are excised as a propeptide. 3 disulfide bridges follow: Cys-37–Cys-72, Cys-39–Cys-65, and Cys-55–Cys-73. Residues 45-47 (RGD) carry the Cell attachment site motif.

The protein belongs to the sea anemone type 3 (BDS) potassium channel toxin family. Moderately expressed in the ectodermal tissue from the distal and proximal tentacles, body wall, and oral disk.

It is found in the secreted. It localises to the nematocyst. Functionally, is member of a fraction that shows antiangiogenic activity, since it inhibits human microvascular endothelial cells (HMEC) tubulogenesis. This protein could be a kunitz-type inhibitor with a RGD motif that could block angiogenesis in binding on integrins. Blocks Kv3 voltage-gated potassium channels. Reduces blood pressure. This is Kappa-actitoxin-Avd4e from Anemonia viridis (Snakelocks anemone).